A 178-amino-acid chain; its full sequence is Large ribosomal subunit protein uL10 (178 aa).

The protein belongs to the universal ribosomal protein uL10 family. In terms of assembly, part of the ribosomal stalk of the 50S ribosomal subunit. The N-terminus interacts with L11 and the large rRNA to form the base of the stalk. The C-terminus forms an elongated spine to which L12 dimers bind in a sequential fashion forming a multimeric L10(L12)X complex.

Functionally, forms part of the ribosomal stalk, playing a central role in the interaction of the ribosome with GTP-bound translation factors. The chain is Large ribosomal subunit protein uL10 from Mycobacterium tuberculosis (strain ATCC 25177 / H37Ra).